The following is a 173-amino-acid chain: NADH-quinone oxidoreductase subunit B (173 aa).

[4Fe-4S] cluster contacts are provided by cysteine 52, cysteine 53, cysteine 117, and cysteine 147.

This sequence belongs to the complex I 20 kDa subunit family. NDH-1 is composed of 14 different subunits. Subunits NuoB, C, D, E, F, and G constitute the peripheral sector of the complex. Requires [4Fe-4S] cluster as cofactor.

Its subcellular location is the cell inner membrane. It catalyses the reaction a quinone + NADH + 5 H(+)(in) = a quinol + NAD(+) + 4 H(+)(out). In terms of biological role, NDH-1 shuttles electrons from NADH, via FMN and iron-sulfur (Fe-S) centers, to quinones in the respiratory chain. Couples the redox reaction to proton translocation (for every two electrons transferred, four hydrogen ions are translocated across the cytoplasmic membrane), and thus conserves the redox energy in a proton gradient. In Pelagibacter ubique (strain HTCC1062), this protein is NADH-quinone oxidoreductase subunit B.